The primary structure comprises 433 residues: Glutamate-1-semialdehyde 2,1-aminomutase (433 aa).

K273 is modified (N6-(pyridoxal phosphate)lysine).

It belongs to the class-III pyridoxal-phosphate-dependent aminotransferase family. HemL subfamily. In terms of assembly, homodimer. Requires pyridoxal 5'-phosphate as cofactor.

The protein localises to the cytoplasm. It carries out the reaction (S)-4-amino-5-oxopentanoate = 5-aminolevulinate. The protein operates within porphyrin-containing compound metabolism; protoporphyrin-IX biosynthesis; 5-aminolevulinate from L-glutamyl-tRNA(Glu): step 2/2. It participates in porphyrin-containing compound metabolism; chlorophyll biosynthesis. The chain is Glutamate-1-semialdehyde 2,1-aminomutase (hemL) from Synechocystis sp. (strain ATCC 27184 / PCC 6803 / Kazusa).